A 180-amino-acid chain; its full sequence is uncharacterized protein (180 aa).

Positions 17–80 (RRSRILHYLM…LIPNMGVRLT (64 aa)) constitute an HTH dtxR-type domain.

The protein belongs to the DtxR/MntR family.

This is an uncharacterized protein from Aeropyrum pernix (strain ATCC 700893 / DSM 11879 / JCM 9820 / NBRC 100138 / K1).